The primary structure comprises 283 residues: Shikimate dehydrogenase (NADP(+)) (283 aa).

Residues Ser16 to Ser18 and Thr63 contribute to the shikimate site. Catalysis depends on Lys67, which acts as the Proton acceptor. An NADP(+)-binding site is contributed by Asp79. Residues Asn88 and Asp103 each coordinate shikimate. NADP(+) is bound by residues Gly128–Ala132 and Gly243.

This sequence belongs to the shikimate dehydrogenase family. Homodimer.

It catalyses the reaction shikimate + NADP(+) = 3-dehydroshikimate + NADPH + H(+). It functions in the pathway metabolic intermediate biosynthesis; chorismate biosynthesis; chorismate from D-erythrose 4-phosphate and phosphoenolpyruvate: step 4/7. In terms of biological role, involved in the biosynthesis of the chorismate, which leads to the biosynthesis of aromatic amino acids. Catalyzes the reversible NADPH linked reduction of 3-dehydroshikimate (DHSA) to yield shikimate (SA). The sequence is that of Shikimate dehydrogenase (NADP(+)) from Xanthomonas euvesicatoria pv. vesicatoria (strain 85-10) (Xanthomonas campestris pv. vesicatoria).